We begin with the raw amino-acid sequence, 576 residues long: Lysine--tRNA ligase (576 aa).

Glutamate 412 and glutamate 419 together coordinate Mg(2+).

Belongs to the class-II aminoacyl-tRNA synthetase family. In terms of assembly, homodimer. It depends on Mg(2+) as a cofactor.

The protein resides in the cytoplasm. It catalyses the reaction tRNA(Lys) + L-lysine + ATP = L-lysyl-tRNA(Lys) + AMP + diphosphate. The polypeptide is Lysine--tRNA ligase (Phocaeicola vulgatus (strain ATCC 8482 / DSM 1447 / JCM 5826 / CCUG 4940 / NBRC 14291 / NCTC 11154) (Bacteroides vulgatus)).